The sequence spans 471 residues: 3-isopropylmalate dehydratase large subunit (471 aa).

Residues Cys-347, Cys-407, and Cys-410 each contribute to the [4Fe-4S] cluster site.

This sequence belongs to the aconitase/IPM isomerase family. LeuC type 1 subfamily. As to quaternary structure, heterodimer of LeuC and LeuD. [4Fe-4S] cluster serves as cofactor.

The catalysed reaction is (2R,3S)-3-isopropylmalate = (2S)-2-isopropylmalate. Its pathway is amino-acid biosynthesis; L-leucine biosynthesis; L-leucine from 3-methyl-2-oxobutanoate: step 2/4. Catalyzes the isomerization between 2-isopropylmalate and 3-isopropylmalate, via the formation of 2-isopropylmaleate. In Geobacillus thermodenitrificans (strain NG80-2), this protein is 3-isopropylmalate dehydratase large subunit.